The following is a 655-amino-acid chain: uncharacterized protein (655 aa).

In terms of domain architecture, PE-PPE spans 245-469; the sequence is PGVIAQALFT…NLKVIVNLGY (225 aa).

This sequence belongs to the mycobacterial PPE family.

This is an uncharacterized protein from Mycobacterium tuberculosis (strain ATCC 25618 / H37Rv).